We begin with the raw amino-acid sequence, 404 residues long: Cysteine desulfurase IscS (404 aa).

Residues 75-76 (AT), Asn-155, Gln-183, and 203-205 (SAH) contribute to the pyridoxal 5'-phosphate site. Lys-206 carries the post-translational modification N6-(pyridoxal phosphate)lysine. Thr-243 is a pyridoxal 5'-phosphate binding site. The Cysteine persulfide intermediate role is filled by Cys-328. [2Fe-2S] cluster is bound at residue Cys-328.

Belongs to the class-V pyridoxal-phosphate-dependent aminotransferase family. NifS/IscS subfamily. As to quaternary structure, homodimer. Forms a heterotetramer with IscU, interacts with other sulfur acceptors. It depends on pyridoxal 5'-phosphate as a cofactor.

The protein resides in the cytoplasm. It carries out the reaction (sulfur carrier)-H + L-cysteine = (sulfur carrier)-SH + L-alanine. The protein operates within cofactor biosynthesis; iron-sulfur cluster biosynthesis. Its function is as follows. Master enzyme that delivers sulfur to a number of partners involved in Fe-S cluster assembly, tRNA modification or cofactor biosynthesis. Catalyzes the removal of elemental sulfur atoms from cysteine to produce alanine. Functions as a sulfur delivery protein for Fe-S cluster synthesis onto IscU, an Fe-S scaffold assembly protein, as well as other S acceptor proteins. The sequence is that of Cysteine desulfurase IscS from Vibrio vulnificus (strain YJ016).